Here is a 352-residue protein sequence, read N- to C-terminus: Ion-translocating oxidoreductase complex subunit D (352 aa).

A run of 5 helical transmembrane segments spans residues 20-40 (IMLLVLLAAIPGIATQLWFFG), 42-62 (GTLVQIILAVISALSAEALVL), 68-88 (PIAAILKDNSALLTGLLLAVS), 89-109 (IPPLAPWWMVVLGTVFAVIIA), and 123-143 (PAMIGYVVLLISFPVQMTNWL). FMN phosphoryl threonine is present on T187. 5 consecutive transmembrane segments (helical) span residues 217 to 237 (GAGWQWVNLAWLAGGVWLLAI), 244 to 264 (IPVSFLVSLALCATLGWLFAP), 267 to 287 (LASPQIHMLSGATMLGAFFIL), 301 to 321 (LIFGALAGVLVWLIRSFGGYP), and 322 to 342 (DGVAFAVLLANITVPLIDYYT).

It belongs to the NqrB/RnfD family. As to quaternary structure, the complex is composed of six subunits: RsxA, RsxB, RsxC, RsxD, RsxE and RsxG. FMN is required as a cofactor.

The protein resides in the cell inner membrane. Part of a membrane-bound complex that couples electron transfer with translocation of ions across the membrane. Required to maintain the reduced state of SoxR. In Escherichia fergusonii (strain ATCC 35469 / DSM 13698 / CCUG 18766 / IAM 14443 / JCM 21226 / LMG 7866 / NBRC 102419 / NCTC 12128 / CDC 0568-73), this protein is Ion-translocating oxidoreductase complex subunit D.